A 214-amino-acid chain; its full sequence is Thymidylate kinase (214 aa).

9 to 16 (GVDGSGKS) contributes to the ATP binding site.

This sequence belongs to the thymidylate kinase family.

It catalyses the reaction dTMP + ATP = dTDP + ADP. Phosphorylation of dTMP to form dTDP in both de novo and salvage pathways of dTTP synthesis. This chain is Thymidylate kinase, found in Symbiobacterium thermophilum (strain DSM 24528 / JCM 14929 / IAM 14863 / T).